Consider the following 76-residue polypeptide: Transcription modulator YdgT (76 aa).

This sequence belongs to the Hha/YmoA/Cnu family.

In terms of biological role, binds to H-NS and modifies the range of genes it silences; H-NS alone silences 'core' genes while the H-NS-Hha complex (and presumably also H-NS-YdgT) silences genes acquired by horizontal gene transfer. Plays a role silencing virulence factors in the absence of factors that induce pathogenicity. The protein is Transcription modulator YdgT (ydgT) of Salmonella typhimurium (strain SL1344).